A 320-amino-acid polypeptide reads, in one-letter code: MSSCNFTHATFVLIGIPGLEKAHFWVGFPLLSMYVVAMFGNCIVVFIVRTERSLHAPMYLFLCMLAAIDLALSTSTMPKILALFWFDSREISFEACLTQMFFIHALSAIESTILLAMAFDRYVAICHPLRHAAVLNNTVTAQIGIVAVVRGSLFFFPLPLLIKRLAFCHSNVLSHSYCVHQDVMKLAYADTLPNVVYGLTAILLVMGVDVMFISLSYFLIIRTVLQLPSKSERAKAFGTCVSHIGVVLAFYVPLIGLSVVHRFGNSLHPIVRVVMGDIYLLLPPVINPIIYGAKTKQIRTRVLAMFKISCDKDLQAVGGK.

At 1–24 (MSSCNFTHATFVLIGIPGLEKAHF) the chain is on the extracellular side. The N-linked (GlcNAc...) asparagine glycan is linked to asparagine 5. A helical membrane pass occupies residues 25–45 (WVGFPLLSMYVVAMFGNCIVV). At 46–53 (FIVRTERS) the chain is on the cytoplasmic side. The helical transmembrane segment at 54-74 (LHAPMYLFLCMLAAIDLALST) threads the bilayer. The Extracellular portion of the chain corresponds to 75-98 (STMPKILALFWFDSREISFEACLT). Residues cysteine 96 and cysteine 178 are joined by a disulfide bond. A helical transmembrane segment spans residues 99–119 (QMFFIHALSAIESTILLAMAF). The Cytoplasmic segment spans residues 120–138 (DRYVAICHPLRHAAVLNNT). The chain crosses the membrane as a helical span at residues 139-159 (VTAQIGIVAVVRGSLFFFPLP). The Extracellular segment spans residues 160 to 195 (LLIKRLAFCHSNVLSHSYCVHQDVMKLAYADTLPNV). The helical transmembrane segment at 196 to 216 (VYGLTAILLVMGVDVMFISLS) threads the bilayer. Over 217–236 (YFLIIRTVLQLPSKSERAKA) the chain is Cytoplasmic. A helical transmembrane segment spans residues 237–257 (FGTCVSHIGVVLAFYVPLIGL). The Extracellular segment spans residues 258 to 272 (SVVHRFGNSLHPIVR). The helical transmembrane segment at 273-293 (VVMGDIYLLLPPVINPIIYGA) threads the bilayer. Residues 294–320 (KTKQIRTRVLAMFKISCDKDLQAVGGK) lie on the Cytoplasmic side of the membrane.

It belongs to the G-protein coupled receptor 1 family. Highly expressed in the prostate. Also expressed in spleen, liver, olfactory epithelium, retinal pigment epithelium and medulla oblongata. In the retinal pigment epithelium expression is restricted to the pigment cells and choroid (at protein level). Expressed in epidermal melanocytes (at protein level).

The protein resides in the cell membrane. The protein localises to the early endosome membrane. Its function is as follows. Olfactory receptor. Activated by the odorant, beta-ionone, a synthetic terpenoid. The activity of this receptor is probably mediated by G-proteins leading to the elevation of intracellular Ca(2+), cAMP and activation of the protein kinases PKA and MAPK3/MAPK1. Stimulation of OR51E2 by beta-ionone affects melanocyte proliferation, differentiation, and melanogenesis. Activation of OR51E2 by beta-ionone increases proliferation and migration of primary retinal pigment epithelial (RPE) cells. Activated also by the short-chain fatty acids (SCFA) acetate and propionate. In response to SCFA, may positively regulate renin secretion and increase blood pressure. May also be activated by steroid hormones and regulate cell proliferation. Activated by L-lactate in glomus cells. The chain is Olfactory receptor 51E2 from Homo sapiens (Human).